A 61-amino-acid polypeptide reads, in one-letter code: Putative antitoxin APE_0472b.1 (61 aa).

This sequence belongs to the UPF0165 family.

In terms of biological role, possibly the antitoxin component of a type II toxin-antitoxin (TA) system. This Aeropyrum pernix (strain ATCC 700893 / DSM 11879 / JCM 9820 / NBRC 100138 / K1) protein is Putative antitoxin APE_0472b.1.